The chain runs to 85 residues: MKPLVSPGLAKACTGLSLIGIVFLLVLSYLFSIEAETLMHDLVGSGLTGKQVAKTCLGAVVIYAVFFLFCGSQVIVSRYQKPVRI.

2 helical membrane-spanning segments follow: residues 13-33 and 56-76; these read CTGL…LFSI and CLGA…QVIV.

As to quaternary structure, V-ATPase is a heteromultimeric enzyme composed of a peripheral catalytic V1 complex (components A to H) attached to an integral membrane V0 proton pore complex (components: a, c, c', c'', d, e, f and VOA1).

It is found in the endoplasmic reticulum membrane. Functionally, accessory component of the V0 complex of vacuolar(H+)-ATPase (V-ATPase), a multisubunit enzyme composed of a peripheral complex (V1) that hydrolyzes ATP and a membrane integral complex (V0) that translocates protons. V-ATPase is responsible for acidifying and maintaining the pH of intracellular compartments. The sequence is that of V-type proton ATPase subunit f from Schizosaccharomyces pombe (strain 972 / ATCC 24843) (Fission yeast).